The chain runs to 169 residues: Crossover junction endodeoxyribonuclease RuvC (169 aa).

Catalysis depends on residues aspartate 15, glutamate 75, and aspartate 147. Positions 15, 75, and 147 each coordinate Mg(2+).

The protein belongs to the RuvC family. As to quaternary structure, homodimer which binds Holliday junction (HJ) DNA. The HJ becomes 2-fold symmetrical on binding to RuvC with unstacked arms; it has a different conformation from HJ DNA in complex with RuvA. In the full resolvosome a probable DNA-RuvA(4)-RuvB(12)-RuvC(2) complex forms which resolves the HJ. It depends on Mg(2+) as a cofactor.

The protein resides in the cytoplasm. The catalysed reaction is Endonucleolytic cleavage at a junction such as a reciprocal single-stranded crossover between two homologous DNA duplexes (Holliday junction).. The RuvA-RuvB-RuvC complex processes Holliday junction (HJ) DNA during genetic recombination and DNA repair. Endonuclease that resolves HJ intermediates. Cleaves cruciform DNA by making single-stranded nicks across the HJ at symmetrical positions within the homologous arms, yielding a 5'-phosphate and a 3'-hydroxyl group; requires a central core of homology in the junction. The consensus cleavage sequence is 5'-(A/T)TT(C/G)-3'. Cleavage occurs on the 3'-side of the TT dinucleotide at the point of strand exchange. HJ branch migration catalyzed by RuvA-RuvB allows RuvC to scan DNA until it finds its consensus sequence, where it cleaves and resolves the cruciform DNA. This is Crossover junction endodeoxyribonuclease RuvC from Caulobacter sp. (strain K31).